The sequence spans 395 residues: uncharacterized protein (395 aa).

The next 7 helical transmembrane spans lie at Leu42 to Ile62, Leu67 to Leu87, Leu97 to Phe117, Ile128 to Pro148, Phe196 to Leu216, Ile241 to Ala261, and Leu281 to Val301.

The protein resides in the cell membrane. This is an uncharacterized protein from Mycoplasma genitalium (strain ATCC 33530 / DSM 19775 / NCTC 10195 / G37) (Mycoplasmoides genitalium).